Reading from the N-terminus, the 417-residue chain is 3-isopropylmalate dehydratase large subunit (417 aa).

Cys-298, Cys-358, and Cys-361 together coordinate [4Fe-4S] cluster.

It belongs to the aconitase/IPM isomerase family. LeuC type 2 subfamily. In terms of assembly, heterodimer of LeuC and LeuD. The cofactor is [4Fe-4S] cluster.

It catalyses the reaction (2R,3S)-3-isopropylmalate = (2S)-2-isopropylmalate. It participates in amino-acid biosynthesis; L-leucine biosynthesis; L-leucine from 3-methyl-2-oxobutanoate: step 2/4. Catalyzes the isomerization between 2-isopropylmalate and 3-isopropylmalate, via the formation of 2-isopropylmaleate. The sequence is that of 3-isopropylmalate dehydratase large subunit from Thermoanaerobacter pseudethanolicus (strain ATCC 33223 / 39E) (Clostridium thermohydrosulfuricum).